A 195-amino-acid polypeptide reads, in one-letter code: UPF0215 protein TK2033 (195 aa).

The protein belongs to the UPF0215 family.

The chain is UPF0215 protein TK2033 from Thermococcus kodakarensis (strain ATCC BAA-918 / JCM 12380 / KOD1) (Pyrococcus kodakaraensis (strain KOD1)).